We begin with the raw amino-acid sequence, 143 residues long: Regulator of ribonuclease activity B (143 aa).

Positions 117–135 (DPDAEYDDEDGENEDDESE) are enriched in acidic residues. The tract at residues 117–143 (DPDAEYDDEDGENEDDESESDKSSRLH) is disordered.

Belongs to the RraB family. As to quaternary structure, interacts with the C-terminal region of Rne.

It localises to the cytoplasm. Globally modulates RNA abundance by binding to RNase E (Rne) and regulating its endonucleolytic activity. Can modulate Rne action in a substrate-dependent manner by altering the composition of the degradosome. In Proteus mirabilis (strain HI4320), this protein is Regulator of ribonuclease activity B.